We begin with the raw amino-acid sequence, 98 residues long: Co-chaperonin GroES (98 aa).

The tract at residues E35–V57 is disordered.

It belongs to the GroES chaperonin family. Heptamer of 7 subunits arranged in a ring. Interacts with the chaperonin GroEL.

Its subcellular location is the cytoplasm. In terms of biological role, together with the chaperonin GroEL, plays an essential role in assisting protein folding. The GroEL-GroES system forms a nano-cage that allows encapsulation of the non-native substrate proteins and provides a physical environment optimized to promote and accelerate protein folding. GroES binds to the apical surface of the GroEL ring, thereby capping the opening of the GroEL channel. The protein is Co-chaperonin GroES of Cutibacterium acnes (strain DSM 16379 / KPA171202) (Propionibacterium acnes).